Reading from the N-terminus, the 184-residue chain is Photosystem I assembly protein Ycf4 (184 aa).

Transmembrane regions (helical) follow at residues 19–39 (LSNF…LLVG) and 57–77 (FIFF…LFIS).

Belongs to the Ycf4 family.

The protein resides in the plastid. Its subcellular location is the chloroplast thylakoid membrane. In terms of biological role, seems to be required for the assembly of the photosystem I complex. The sequence is that of Photosystem I assembly protein Ycf4 from Jasminum nudiflorum (Winter jasmine).